The primary structure comprises 110 residues: Late cornified envelope protein 1A (110 aa).

Over residues 1-10 the composition is skewed to low complexity; it reads MSCQQSQQQC. Disordered regions lie at residues 1–23 and 83–110; these read MSCQQSQQQCQPPPKCTPKCPPK and QSSGCCSQPSGGSSCCGGDSGQHSGGCC. The span at 11 to 23 shows a compositional bias: pro residues; the sequence is QPPPKCTPKCPPK. Low complexity predominate over residues 83 to 95; sequence QSSGCCSQPSGGS. Residues 96–110 show a composition bias toward gly residues; that stretch reads SCCGGDSGQHSGGCC.

Belongs to the LCE family. In terms of assembly, interacts with CYSRT1. Skin-specific. Expression was readily detected in adult trunk skin, adult arm skin, fetal skin, penal skin, vulva, esophagus and tongue. Not expressed in the cervix, rectum, lung, colon, or placenta.

Functionally, precursors of the cornified envelope of the stratum corneum. This is Late cornified envelope protein 1A (LCE1A) from Homo sapiens (Human).